The primary structure comprises 101 residues: Anti-sigma factor RshA (101 aa).

A disordered region spans residues 1–20 (MSETEREDERWTPPIGPIDP). The iron-sulfur cluster site is built by Cys25, His51, Cys55, and Cys58. Residue Thr96 is modified to Phosphothreonine.

The protein belongs to the zinc-associated anti-sigma factor (ZAS) superfamily. Interacts with cognate ECF RNA polymerase sigma factor SigH under reducing conditions; the complex is disrupted under oxiding conditions or as temperatures rise. Binding inhibits the interaction of SigH with the RNA polymerase catalytic core. Requires iron-sulfur cluster as cofactor. Post-translationally, phosphorylated, probably by PknB. Phosphorylation decreases interaction with SigH, probably leading to increased SigH-mediated transcription.

Functionally, a redox-regulated anti-sigma factor for cognate extracytoplasmic function (ECF) sigma factor SigH. ECF sigma factors are held in an inactive form by an anti-sigma factor. Overexpression leads to increased susceptibility to diamide. The protein is Anti-sigma factor RshA (rshA) of Mycolicibacterium smegmatis (strain ATCC 700084 / mc(2)155) (Mycobacterium smegmatis).